We begin with the raw amino-acid sequence, 198 residues long: FMN-dependent NADH:quinone oxidoreductase (198 aa).

FMN-binding positions include serine 10, 16 to 18 (SQS), 94 to 97 (MYNF), and 138 to 141 (TRGG).

Belongs to the azoreductase type 1 family. In terms of assembly, homodimer. FMN serves as cofactor.

It catalyses the reaction 2 a quinone + NADH + H(+) = 2 a 1,4-benzosemiquinone + NAD(+). The catalysed reaction is N,N-dimethyl-1,4-phenylenediamine + anthranilate + 2 NAD(+) = 2-(4-dimethylaminophenyl)diazenylbenzoate + 2 NADH + 2 H(+). Quinone reductase that provides resistance to thiol-specific stress caused by electrophilic quinones. Its function is as follows. Also exhibits azoreductase activity. Catalyzes the reductive cleavage of the azo bond in aromatic azo compounds to the corresponding amines. This chain is FMN-dependent NADH:quinone oxidoreductase, found in Shewanella sp. (strain MR-4).